The following is a 217-amino-acid chain: Large ribosomal subunit protein uL1 (217 aa).

Belongs to the universal ribosomal protein uL1 family. In terms of assembly, part of the 50S ribosomal subunit.

Its function is as follows. Binds directly to 23S rRNA. The L1 stalk is quite mobile in the ribosome, and is involved in E site tRNA release. In terms of biological role, protein L1 is also a translational repressor protein, it controls the translation of the L11 operon by binding to its mRNA. In Anaplasma marginale (strain St. Maries), this protein is Large ribosomal subunit protein uL1.